The sequence spans 1206 residues: Methionine synthase (1206 aa).

The Hcy-binding domain occupies 1-314; it reads MRVTAANQHQ…DHIREVAAAV (314 aa). The Zn(2+) site is built by Cys233, Cys299, and Cys300. Residues 350 to 609 enclose the Pterin-binding domain; the sequence is VLMIGERTNA…IPEEQRQAAL (260 aa). The region spanning 642–735 is the B12-binding N-terminal domain; the sequence is REAELAKLPL…HMEKSDCDFG (94 aa). The region spanning 740–877 is the B12-binding domain; sequence KGRIVLATVK…SAKRGEALAP (138 aa). Methylcob(III)alamin contacts are provided by residues 750-754, His753, Ser798, and Ala856; that span reads GDVHD. A disordered region spans residues 873–925; it reads EALAPGSPESLAAEADRNKETERKARHERSKRIAVQRKAAEEPVEVPERSDVP. Residues 886 to 897 show a composition bias toward basic and acidic residues; the sequence is EADRNKETERKA. A compositionally biased stretch (basic residues) spans 898 to 907; sequence RHERSKRIAV. An AdoMet activation domain is found at 907-1206; sequence VQRKAAEEPV…HHPAAKYFNV (300 aa). A compositionally biased stretch (basic and acidic residues) spans 910 to 924; sequence KAAEEPVEVPERSDV. S-adenosyl-L-methionine-binding positions include Asp954, Arg1149, and 1203–1204; that span reads YF.

This sequence belongs to the vitamin-B12 dependent methionine synthase family. The cofactor is methylcob(III)alamin. Zn(2+) is required as a cofactor.

The catalysed reaction is (6S)-5-methyl-5,6,7,8-tetrahydrofolate + L-homocysteine = (6S)-5,6,7,8-tetrahydrofolate + L-methionine. It participates in amino-acid biosynthesis; L-methionine biosynthesis via de novo pathway; L-methionine from L-homocysteine (MetH route): step 1/1. Functionally, catalyzes the transfer of a methyl group from methyl-cobalamin to homocysteine, yielding enzyme-bound cob(I)alamin and methionine. Subsequently, remethylates the cofactor using methyltetrahydrofolate. The polypeptide is Methionine synthase (metH) (Mycobacterium leprae (strain TN)).